A 513-amino-acid polypeptide reads, in one-letter code: Zinc finger CCCH-type with G patch domain-containing protein (513 aa).

The segment at 155 to 178 adopts a C3H1-type zinc-finger fold; the sequence is PCSYYLEGECRFDEAKCRFSHGAL. 2 stretches are compositionally biased toward acidic residues: residues 252-261 and 273-283; these read DQDEDDELSS and SDEAESDMDDL. The tract at residues 252–283 is disordered; sequence DQDEDDELSSEESTSSMRDASSDEAESDMDDL. The G-patch domain occupies 312-358; it reads TRGIGSKLMEKMGYIHGTGLGSEGRGIVTPVSAQILPQGRSLDACME. Disordered regions lie at residues 411-430 and 477-513; these read PGES…NNEL and QVQM…MFEF. Positions 477 to 495 are enriched in polar residues; sequence QVQMQSHKQELATLQAQER. Residues 496-513 show a composition bias toward basic and acidic residues; sequence SLSKEQQTRKSKNKMFEF.

It is found in the nucleus. In terms of biological role, transcription repressor. This chain is Zinc finger CCCH-type with G patch domain-containing protein, found in Drosophila sechellia (Fruit fly).